Here is a 317-residue protein sequence, read N- to C-terminus: MGMVRHTNESNLAGFILLGFSDYPQLQKVLFVLILILYLLTILGNTTIILVSRLEPKLHMPMYFFLSHLSFLYRCFTSSVIPQLLVNLWEPMKTIAYGGCLVHLYNSHALGSTECVLPAVMSCDRYVAVCRPLHYTVLMHIHLCMALASMAWLSGIATTLVQSTLTLQLPFCGHRQVDHFICEVPVLIKLACVGTTFNEAELFVASILFLIVPVSFILVSSGYIAHAVLRIKSATRRQKAFGTCFSHLTVVTIFYGTIIFMYLQPAKSRSRDQGKFVSLFYTVVTRMLNPLIYTLRIKEVKGALKKVLAKALGVNIL.

Residues Met-1 to Lys-28 are Extracellular-facing. Residue Asn-8 is glycosylated (N-linked (GlcNAc...) asparagine). A helical transmembrane segment spans residues Val-29–Ser-52. Over Arg-53 to Met-60 the chain is Cytoplasmic. Residues Pro-61–Pro-82 traverse the membrane as a helical segment. At Gln-83 to His-103 the chain is on the extracellular side. A disulfide bridge connects residues Cys-100 and Cys-192. The helical transmembrane segment at Leu-104–Cys-123 threads the bilayer. Residues Asp-124 to His-142 lie on the Cytoplasmic side of the membrane. Residues Leu-143 to Val-161 form a helical membrane-spanning segment. The Extracellular portion of the chain corresponds to Gln-162 to Asn-198. The helical transmembrane segment at Glu-199–Gly-222 threads the bilayer. The Cytoplasmic segment spans residues Tyr-223–Lys-239. The helical transmembrane segment at Ala-240–Tyr-262 threads the bilayer. The Extracellular segment spans residues Leu-263–Lys-275. The helical transmembrane segment at Phe-276–Leu-295 threads the bilayer. Residues Arg-296–Leu-317 lie on the Cytoplasmic side of the membrane.

Belongs to the G-protein coupled receptor 1 family.

The protein localises to the cell membrane. Odorant receptor. The sequence is that of Olfactory receptor 2G2 (OR2G2) from Homo sapiens (Human).